The chain runs to 47 residues: Mu-theraphotoxin-An1a (47 aa).

3 cysteine pairs are disulfide-bonded: Cys-4–Cys-34, Cys-8–Cys-39, and Cys-22–Cys-44.

Contains 3 disulfide bonds. In terms of tissue distribution, expressed by the venom gland.

The protein localises to the secreted. Is toxic to insects. Reduces amplitude and frequency of spontaneous firing and inhibits voltage-gated sodium current (Nav) in the dorsal unpaired median (DUM) neurons of P.americana. This is Mu-theraphotoxin-An1a from Acanthoscurria natalensis (Tarantula spider).